The chain runs to 355 residues: Histidinol-phosphate aminotransferase 2 (355 aa).

K213 is modified (N6-(pyridoxal phosphate)lysine).

It belongs to the class-II pyridoxal-phosphate-dependent aminotransferase family. Histidinol-phosphate aminotransferase subfamily. Homodimer. Requires pyridoxal 5'-phosphate as cofactor.

It catalyses the reaction L-histidinol phosphate + 2-oxoglutarate = 3-(imidazol-4-yl)-2-oxopropyl phosphate + L-glutamate. Its pathway is amino-acid biosynthesis; L-histidine biosynthesis; L-histidine from 5-phospho-alpha-D-ribose 1-diphosphate: step 7/9. In Burkholderia lata (strain ATCC 17760 / DSM 23089 / LMG 22485 / NCIMB 9086 / R18194 / 383), this protein is Histidinol-phosphate aminotransferase 2.